Reading from the N-terminus, the 66-residue chain is Photosystem II reaction center protein J (66 aa).

A helical transmembrane segment spans residues 37–57; the sequence is LWLVATAGGMAVLFVVGLFFY.

It belongs to the PsbJ family. In terms of assembly, PSII is composed of 1 copy each of membrane proteins PsbA, PsbB, PsbC, PsbD, PsbE, PsbF, PsbH, PsbI, PsbJ, PsbK, PsbL, PsbM, PsbT, PsbX, PsbY, PsbZ, Psb30/Ycf12, peripheral proteins PsbO, CyanoQ (PsbQ), PsbU, PsbV and a large number of cofactors. It forms dimeric complexes.

Its subcellular location is the cellular thylakoid membrane. Its function is as follows. One of the components of the core complex of photosystem II (PSII). PSII is a light-driven water:plastoquinone oxidoreductase that uses light energy to abstract electrons from H(2)O, generating O(2) and a proton gradient subsequently used for ATP formation. It consists of a core antenna complex that captures photons, and an electron transfer chain that converts photonic excitation into a charge separation. The protein is Photosystem II reaction center protein J of Synechococcus sp. (strain WH7803).